The chain runs to 516 residues: Flagellar radial spoke protein 3 (516 aa).

2 stretches are compositionally biased toward polar residues: residues 1–11 (MVQAKAQQQLY) and 62–74 (ATQTQTKGPSPAS). Disordered stretches follow at residues 1–32 (MVQAKAQQQLYTHAAEPKAVQQRRAKYREDET), 60–90 (ADATQTQTKGPSPASTKKRTTRTLPPRTPEA), 388–412 (NAKWEADKAEAAEKARAEAEAAAEE), and 424–447 (AAAEAEERGEEPPAEPPSLPDGVE). Over residues 391–412 (WEADKAEAAEKARAEAEAAAEE) the composition is skewed to basic and acidic residues.

The protein belongs to the flagellar radial spoke RSP3 family. As to quaternary structure, interacts with FAP91. Protein 3 is one of the 5 radial spoke proteins that are phosphorylated. Post-translationally, protein 3a might only differ from protein 3 in being unphosphorylated.

It localises to the cytoplasm. The protein resides in the cytoskeleton. The protein localises to the flagellum axoneme. Protein 3 may attach the radial spoke to the outer doublet microtubule or is required to form a stable spoke structure. Functionally, flagellar radial spokes contribute to the regulation of dynein arm activity and thus the pattern of flagellar bending. They consist of a thin stalk, which is attached to the a subfiber of the outer doublet microtubule, and a bulbous head, which is attached to the stalk and appears to interact with the projections from the central pair of microtubules. The chain is Flagellar radial spoke protein 3 from Chlamydomonas reinhardtii (Chlamydomonas smithii).